A 983-amino-acid polypeptide reads, in one-letter code: Importin beta-like protein kap113 (983 aa).

The Importin N-terminal domain maps to 24 to 96; sequence AEGHLNNWKK…RCNALLGSIK (73 aa).

It belongs to the importin beta family.

It localises to the nucleus. Functions as a component of the nuclear pore complex (NPC). NPC components, collectively referred to as nucleoporins (NUPs), can play the role of both NPC structural components and of docking or interaction partners for transiently associated nuclear transport factors. Active directional transport is assured by both, a Phe-Gly (FG) repeat affinity gradient for these transport factors across the NPC and a transport cofactor concentration gradient across the nuclear envelope. Involved in the export of mRNA from the nucleus to the cytoplasm. May play a role in mitotic spindle formation and/or function. The protein is Importin beta-like protein kap113 (kap113) of Schizosaccharomyces pombe (strain 972 / ATCC 24843) (Fission yeast).